Here is a 344-residue protein sequence, read N- to C-terminus: Aurora kinase B (344 aa).

The tract at residues 1–22 (MAQKENSYPWPYGRQTAPSGLS) is disordered. Thr35 bears the Phosphothreonine mark. At Ser62 the chain carries Phosphoserine. Residue Thr64 is modified to Phosphothreonine. The Protein kinase domain maps to 77-327 (FEIGRPLGKG…LAQVSAHPWV (251 aa)). ATP is bound by residues 83-91 (LGKGKFGNV) and Lys106. Asp200 serves as the catalytic Proton acceptor. N6-acetyllysine is present on Lys215. Residue Ser227 is modified to Phosphoserine. Thr232 carries the phosphothreonine; by autocatalysis modification.

Belongs to the protein kinase superfamily. Ser/Thr protein kinase family. Aurora subfamily. Component of the chromosomal passenger complex (CPC) composed of at least BIRC5/survivin, CDCA8/borealin, INCENP, AURKB or AURKC; predominantly independent AURKB- and AURKC-containing complexes exist. Associates with RACGAP1 during M phase. Interacts with SPDYC; this interaction may be required for proper localization of active, Thr-232-phosphorylated AURKB form during prometaphase and metaphase. Interacts with p53/TP53. Interacts (via the middle kinase domain) with NOC2L (via the N- and C-terminus domains). Interacts with CDCA1. Interacts with EVI5. Interacts with JTB. Interacts with NDC80. Interacts with PSMA3. Interacts with RNF2/RING1B. Interacts with SEPTIN1. Interacts with SIRT2. Interacts with TACC1. Interacts with TTC28. In terms of processing, the phosphorylation of Thr-232 requires the binding to INCENP and occurs by means of an autophosphorylation mechanism. Thr-232 phosphorylation is indispensable for the AURKB kinase activity. Post-translationally, acetylated at Lys-215 by KAT5 at kinetochores, increasing AURKB activity and promoting accurate chromosome segregation in mitosis. Ubiquitinated by different BCR (BTB-CUL3-RBX1) E3 ubiquitin ligase complexes. Ubiquitinated by the BCR(KLHL9-KLHL13) E3 ubiquitin ligase complex, ubiquitination leads to removal from mitotic chromosomes and is required for cytokinesis. During anaphase, the BCR(KLHL21) E3 ubiquitin ligase complex recruits the CPC complex from chromosomes to the spindle midzone and mediates the ubiquitination of AURKB. Ubiquitination of AURKB by BCR(KLHL21) E3 ubiquitin ligase complex may not lead to its degradation by the proteasome. Deubiquitinated by USP35; inhibiting CDH1-mediated degradation of AURKB. As to expression, high level expression seen in the thymus. It is also expressed in the spleen, lung, testis, colon, placenta and fetal liver. Expressed during S and G2/M phase and expression is up-regulated in cancer cells during M phase. Not expressed in normal liver, high expression in metastatic liver.

Its subcellular location is the nucleus. It localises to the chromosome. The protein resides in the centromere. It is found in the kinetochore. The protein localises to the cytoplasm. Its subcellular location is the cytoskeleton. It localises to the spindle. The protein resides in the midbody. The catalysed reaction is L-seryl-[protein] + ATP = O-phospho-L-seryl-[protein] + ADP + H(+). It carries out the reaction L-threonyl-[protein] + ATP = O-phospho-L-threonyl-[protein] + ADP + H(+). Activity is greatly increased when AURKB is within the CPC complex. In particular, AURKB-phosphorylated INCENP acts as an activator of AURKB. Positive feedback between HASPIN and AURKB contributes to CPC localization. Inhibited by ZM447439. Serine/threonine-protein kinase component of the chromosomal passenger complex (CPC), a complex that acts as a key regulator of mitosis. The CPC complex has essential functions at the centromere in ensuring correct chromosome alignment and segregation and is required for chromatin-induced microtubule stabilization and spindle assembly. Involved in the bipolar attachment of spindle microtubules to kinetochores and is a key regulator for the onset of cytokinesis during mitosis. Required for central/midzone spindle assembly and cleavage furrow formation. Key component of the cytokinesis checkpoint, a process required to delay abscission to prevent both premature resolution of intercellular chromosome bridges and accumulation of DNA damage: phosphorylates CHMP4C, leading to retain abscission-competent VPS4 (VPS4A and/or VPS4B) at the midbody ring until abscission checkpoint signaling is terminated at late cytokinesis. AURKB phosphorylates the CPC complex subunits BIRC5/survivin, CDCA8/borealin and INCENP. Phosphorylation of INCENP leads to increased AURKB activity. Other known AURKB substrates involved in centromeric functions and mitosis are CENPA, DES/desmin, GPAF, KIF2C, NSUN2, RACGAP1, SEPTIN1, VIM/vimentin, HASPIN, and histone H3. A positive feedback loop involving HASPIN and AURKB contributes to localization of CPC to centromeres. Phosphorylation of VIM controls vimentin filament segregation in cytokinetic process, whereas histone H3 is phosphorylated at 'Ser-10' and 'Ser-28' during mitosis (H3S10ph and H3S28ph, respectively). AURKB is also required for kinetochore localization of BUB1 and SGO1. Phosphorylation of p53/TP53 negatively regulates its transcriptional activity. Key regulator of active promoters in resting B- and T-lymphocytes: acts by mediating phosphorylation of H3S28ph at active promoters in resting B-cells, inhibiting RNF2/RING1B-mediated ubiquitination of histone H2A and enhancing binding and activity of the USP16 deubiquitinase at transcribed genes. Acts as an inhibitor of CGAS during mitosis: catalyzes phosphorylation of the N-terminus of CGAS during the G2-M transition, blocking CGAS liquid phase separation and activation, and thereby preventing CGAS-induced autoimmunity. Phosphorylates KRT5 during anaphase and telophase. Phosphorylates ATXN10 which promotes phosphorylation of ATXN10 by PLK1 and may play a role in the regulation of cytokinesis and stimulating the proteasomal degradation of ATXN10. This chain is Aurora kinase B (AURKB), found in Homo sapiens (Human).